Consider the following 492-residue polypeptide: N-succinylglutamate 5-semialdehyde dehydrogenase (492 aa).

Position 220–225 (220–225 (GSASTG)) interacts with NAD(+). Active-site residues include Glu-243 and Cys-277.

It belongs to the aldehyde dehydrogenase family. AstD subfamily.

The enzyme catalyses N-succinyl-L-glutamate 5-semialdehyde + NAD(+) + H2O = N-succinyl-L-glutamate + NADH + 2 H(+). Its pathway is amino-acid degradation; L-arginine degradation via AST pathway; L-glutamate and succinate from L-arginine: step 4/5. Catalyzes the NAD-dependent reduction of succinylglutamate semialdehyde into succinylglutamate. This chain is N-succinylglutamate 5-semialdehyde dehydrogenase, found in Salmonella paratyphi A (strain AKU_12601).